We begin with the raw amino-acid sequence, 93 residues long: Large ribosomal subunit protein bL31B (93 aa).

It belongs to the bacterial ribosomal protein bL31 family. Type B subfamily. In terms of assembly, part of the 50S ribosomal subunit.

The sequence is that of Large ribosomal subunit protein bL31B from Pseudomonas syringae pv. syringae (strain B728a).